Here is a 266-residue protein sequence, read N- to C-terminus: MLTIFAVSDSIGETAQQVAMAAASQFKDNAEVKRIPYVKSLEDVEDLIKTIEDCEACMIVSTIITVNVREYLTQKCIEKNINIINVLGPIINVASTILNKYPDYNPGAMWNTDETYYKRIEAMEFAMQYDDSKDYRGLKNADVVLVGLSRTSKTPLCMYLANKGIKAINIPLVPEVGVPEELYEIDKKKIFGLTINPLQLIEIRKRRLDKFHRISADIEYASDSRILEEFEFADKILRKIGCRTIDVTQRAIEDTALIIMEKLGVK.

An ADP-binding site is contributed by 147-154 (GLSRTSKT).

It belongs to the pyruvate, phosphate/water dikinase regulatory protein family. PDRP subfamily.

The catalysed reaction is N(tele)-phospho-L-histidyl/L-threonyl-[pyruvate, phosphate dikinase] + ADP = N(tele)-phospho-L-histidyl/O-phospho-L-threonyl-[pyruvate, phosphate dikinase] + AMP + H(+). It catalyses the reaction N(tele)-phospho-L-histidyl/O-phospho-L-threonyl-[pyruvate, phosphate dikinase] + phosphate + H(+) = N(tele)-phospho-L-histidyl/L-threonyl-[pyruvate, phosphate dikinase] + diphosphate. Its function is as follows. Bifunctional serine/threonine kinase and phosphorylase involved in the regulation of the pyruvate, phosphate dikinase (PPDK) by catalyzing its phosphorylation/dephosphorylation. The chain is Putative pyruvate, phosphate dikinase regulatory protein from Clostridium perfringens (strain SM101 / Type A).